Here is a 67-residue protein sequence, read N- to C-terminus: DNA-directed RNA polymerase subunit omega (67 aa).

Belongs to the RNA polymerase subunit omega family. The RNAP catalytic core consists of 2 alpha, 1 beta, 1 beta' and 1 omega subunit. When a sigma factor is associated with the core the holoenzyme is formed, which can initiate transcription.

It catalyses the reaction RNA(n) + a ribonucleoside 5'-triphosphate = RNA(n+1) + diphosphate. In terms of biological role, promotes RNA polymerase assembly. Latches the N- and C-terminal regions of the beta' subunit thereby facilitating its interaction with the beta and alpha subunits. The sequence is that of DNA-directed RNA polymerase subunit omega (rpoZ) from Treponema pallidum (strain Nichols).